A 181-amino-acid chain; its full sequence is Peptidyl-tRNA hydrolase (181 aa).

Tyr14 lines the tRNA pocket. His19 acts as the Proton acceptor in catalysis. Residues Tyr62, Asn64, and Asn108 each contribute to the tRNA site.

Belongs to the PTH family. In terms of assembly, monomer.

It is found in the cytoplasm. It catalyses the reaction an N-acyl-L-alpha-aminoacyl-tRNA + H2O = an N-acyl-L-amino acid + a tRNA + H(+). Functionally, hydrolyzes ribosome-free peptidyl-tRNAs (with 1 or more amino acids incorporated), which drop off the ribosome during protein synthesis, or as a result of ribosome stalling. Catalyzes the release of premature peptidyl moieties from peptidyl-tRNA molecules trapped in stalled 50S ribosomal subunits, and thus maintains levels of free tRNAs and 50S ribosomes. This Campylobacter jejuni (strain RM1221) protein is Peptidyl-tRNA hydrolase.